Consider the following 451-residue polypeptide: Signal transduction histidine-protein kinase ArlS (451 aa).

The next 2 helical transmembrane spans lie at 11–31 and 156–176; these read IIVT…IIIF and IIAL…SYVF. Positions 178–231 constitute an HAMP domain; sequence TQITKPLVSLSNKMIEIRRDGFQNKLQLNTNYEEIDNLANTFNEMMSQIEESFN. One can recognise a Histidine kinase domain in the interval 239–451; it reads DASHELRTPL…NKGTTFKIIF (213 aa). A Phosphohistidine; by autocatalysis modification is found at H242.

Autophosphorylated.

It is found in the cell membrane. It carries out the reaction ATP + protein L-histidine = ADP + protein N-phospho-L-histidine.. Its function is as follows. Member of the two-component regulatory system ArlS/ArlR involved in the regulation of adhesion, autolysis, multidrug resistance and virulence. ArlS probably functions as a sensor protein kinase which is autophosphorylated at a histidine residue and transfers its phosphate group to ArlR. The sequence is that of Signal transduction histidine-protein kinase ArlS (arlS) from Staphylococcus aureus (strain MRSA252).